We begin with the raw amino-acid sequence, 336 residues long: Ribosomal RNA small subunit methyltransferase C (336 aa).

This sequence belongs to the methyltransferase superfamily. RsmC family. Monomer.

It is found in the cytoplasm. It carries out the reaction guanosine(1207) in 16S rRNA + S-adenosyl-L-methionine = N(2)-methylguanosine(1207) in 16S rRNA + S-adenosyl-L-homocysteine + H(+). In terms of biological role, specifically methylates the guanine in position 1207 of 16S rRNA in the 30S particle. In Hamiltonella defensa subsp. Acyrthosiphon pisum (strain 5AT), this protein is Ribosomal RNA small subunit methyltransferase C.